A 413-amino-acid chain; its full sequence is DnaJ protein homolog xdj1 (413 aa).

The J domain maps to 6–73 (KLYDILEVHF…ESREMYDMYG (68 aa)). The CR-type zinc-finger motif lies at 134–219 (GKEVKLRATR…CKGSGTVPEQ (86 aa)). CXXCXGXG motif repeat units follow at residues 147–154 (CPRCQGRG), 164–171 (CLSCDGKG), 191–198 (CDTCNGKG), and 207–214 (CKHCKGSG). Cysteine methyl ester is present on C410. C410 carries S-farnesyl cysteine lipidation. A propeptide spans 411 to 413 (QAQ) (removed in mature form).

The protein resides in the endoplasmic reticulum membrane. The sequence is that of DnaJ protein homolog xdj1 (xdj1) from Schizosaccharomyces pombe (strain 972 / ATCC 24843) (Fission yeast).